The chain runs to 169 residues: MNNKTNWVIIGRFGRPHGIKGFVTVHSFTDPADNILRYNDWHVFLNKQWQPLKLLTIEVRSKAIIAQIEGYPKRELVSALTNLDIGVQESQLAALAPGEYYWYQLIGMSVINSKGDLFGKVVEIMPTGSNDVLVVEGEKRHLIPYLPGQFVINVDESQQVITVDWDMNF.

The PRC barrel domain occupies 97–169 (PGEYYWYQLI…VITVDWDMNF (73 aa)).

It belongs to the RimM family. As to quaternary structure, binds ribosomal protein uS19.

Its subcellular location is the cytoplasm. An accessory protein needed during the final step in the assembly of 30S ribosomal subunit, possibly for assembly of the head region. Essential for efficient processing of 16S rRNA. May be needed both before and after RbfA during the maturation of 16S rRNA. It has affinity for free ribosomal 30S subunits but not for 70S ribosomes. The chain is Ribosome maturation factor RimM from Legionella pneumophila subsp. pneumophila (strain Philadelphia 1 / ATCC 33152 / DSM 7513).